A 486-amino-acid chain; its full sequence is UDP-N-acetylmuramate--L-alanine ligase (486 aa).

Gly129 to Thr135 contacts ATP.

The protein belongs to the MurCDEF family.

Its subcellular location is the cytoplasm. The catalysed reaction is UDP-N-acetyl-alpha-D-muramate + L-alanine + ATP = UDP-N-acetyl-alpha-D-muramoyl-L-alanine + ADP + phosphate + H(+). The protein operates within cell wall biogenesis; peptidoglycan biosynthesis. Its function is as follows. Cell wall formation. This Vibrio cholerae serotype O1 (strain ATCC 39315 / El Tor Inaba N16961) protein is UDP-N-acetylmuramate--L-alanine ligase.